The following is a 96-amino-acid chain: Co-chaperonin GroES (96 aa).

It belongs to the GroES chaperonin family. Heptamer of 7 subunits arranged in a ring. Interacts with the chaperonin GroEL.

The protein resides in the cytoplasm. In terms of biological role, together with the chaperonin GroEL, plays an essential role in assisting protein folding. The GroEL-GroES system forms a nano-cage that allows encapsulation of the non-native substrate proteins and provides a physical environment optimized to promote and accelerate protein folding. GroES binds to the apical surface of the GroEL ring, thereby capping the opening of the GroEL channel. The chain is Co-chaperonin GroES from Verminephrobacter eiseniae (strain EF01-2).